Reading from the N-terminus, the 241-residue chain is Ubiquinone biosynthesis O-methyltransferase (241 aa).

4 residues coordinate S-adenosyl-L-methionine: R42, G62, D83, and M127.

Belongs to the methyltransferase superfamily. UbiG/COQ3 family.

The enzyme catalyses a 3-demethylubiquinol + S-adenosyl-L-methionine = a ubiquinol + S-adenosyl-L-homocysteine + H(+). It carries out the reaction a 3-(all-trans-polyprenyl)benzene-1,2-diol + S-adenosyl-L-methionine = a 2-methoxy-6-(all-trans-polyprenyl)phenol + S-adenosyl-L-homocysteine + H(+). It participates in cofactor biosynthesis; ubiquinone biosynthesis. Functionally, O-methyltransferase that catalyzes the 2 O-methylation steps in the ubiquinone biosynthetic pathway. The sequence is that of Ubiquinone biosynthesis O-methyltransferase from Pectobacterium atrosepticum (strain SCRI 1043 / ATCC BAA-672) (Erwinia carotovora subsp. atroseptica).